A 214-amino-acid chain; its full sequence is Rac-like GTP-binding protein 1 (214 aa).

GTP contacts are provided by residues 17–24 (GDGAVGKT), 20–25 (AVGKTC), Thr-42, 64–68 (DTAGQ), Gly-67, 122–125 (TKLD), 123–125 (KLD), and 164–165 (SK). The short motif at 39 to 47 (YIPTVFDNF) is the Effector region element.

The protein belongs to the small GTPase superfamily. Rho family. As to quaternary structure, may interact with MPK1/MAPK6. Binds to RBOHB, preferentially in the GTP-bound form. Interacts with CCR1 in a GTP-dependent manner. May be palmitoylated.

It is found in the cytoplasm. The protein localises to the membrane. Its function is as follows. Small GTPase playing a general role in disease resistance signaling pathway. Acts downstream of heterotrimeric G protein alpha subunit. Regulates cell death and reactive oxygen species production, probably through NADPH oxidase. Also involved in sphingolipid elicitor (SE)-dependent defense signaling. Activates phytoalexin production and alters defense-related genes. Down-regulates metallothionein 2b, a reactive oxygen scavenger. May control lignin synthesis through regulation of both NADPH oxidase and CCR1 activities during defense responses. Stimulates lignin synthesis in suspension cell culture. This chain is Rac-like GTP-binding protein 1 (RAC1), found in Oryza sativa subsp. japonica (Rice).